The primary structure comprises 254 residues: Major prion protein (254 aa).

Positions 1-22 (MANLSYWLLALFVATWTDVGLC) are cleaved as a signal peptide. The interval 23–231 (KKRPKPGGWN…SQAYYDGRRS (209 aa)) is interaction with GRB2, ERI3 and SYN1. Residues 25–104 (RPKPGGWNTG…THNQWNKPSK (80 aa)) form a disordered region. 5 consecutive repeat copies span residues 51–59 (PQGGGTWGQ), 60–67 (PHGGGWGQ), 68–75 (PHGGGWGQ), 76–83 (PHGGGWGQ), and 84–91 (PHGGGWGQ). Residues 51–91 (PQGGGTWGQPHGGGWGQPHGGGWGQPHGGGWGQPHGGGWGQ) form a 5 X 8 AA tandem repeats of P-H-G-G-G-W-G-Q region. Residues 52–95 (QGGGTWGQPHGGGWGQPHGGGWGQPHGGGWGQPHGGGWGQGGGT) show a composition bias toward gly residues. Cu(2+)-binding residues include His-61, Gly-62, Gly-63, His-69, Gly-70, Gly-71, His-77, Gly-78, Gly-79, His-85, Gly-86, and Gly-87. The segment at 90-231 (GQGGGTHNQW…SQAYYDGRRS (142 aa)) is prP27-30 (protease resistant core). Cysteines 179 and 214 form a disulfide. Asn-181 and Asn-197 each carry an N-linked (GlcNAc...) asparagine glycan. The GPI-anchor amidated serine moiety is linked to residue Ser-231. A propeptide spans 232–254 (SAVLFSSPPVILLISFLIFLIVG) (removed in mature form).

This sequence belongs to the prion family. Monomer and homodimer. Has a tendency to aggregate into amyloid fibrils containing a cross-beta spine, formed by a steric zipper of superposed beta-strands. Soluble oligomers may represent an intermediate stage on the path to fibril formation. Copper binding may promote oligomerization. Interacts with GRB2, APP, ERI3/PRNPIP and SYN1. Mislocalized cytosolically exposed PrP interacts with MGRN1; this interaction alters MGRN1 subcellular location and causes lysosomal enlargement. Interacts with KIAA1191.

The protein resides in the cell membrane. It is found in the golgi apparatus. Its function is as follows. Its primary physiological function is unclear. Has cytoprotective activity against internal or environmental stresses. May play a role in neuronal development and synaptic plasticity. May be required for neuronal myelin sheath maintenance. May play a role in iron uptake and iron homeostasis. Soluble oligomers are toxic to cultured neuroblastoma cells and induce apoptosis (in vitro). Association with GPC1 (via its heparan sulfate chains) targets PRNP to lipid rafts. Also provides Cu(2+) or Zn(2+) for the ascorbate-mediated GPC1 deaminase degradation of its heparan sulfate side chains. This Cricetulus griseus (Chinese hamster) protein is Major prion protein (PRNP).